A 210-amino-acid chain; its full sequence is Large ribosomal subunit protein uL3 (210 aa).

It belongs to the universal ribosomal protein uL3 family. As to quaternary structure, part of the 50S ribosomal subunit. Forms a cluster with proteins L14 and L19.

In terms of biological role, one of the primary rRNA binding proteins, it binds directly near the 3'-end of the 23S rRNA, where it nucleates assembly of the 50S subunit. This Lawsonia intracellularis (strain PHE/MN1-00) protein is Large ribosomal subunit protein uL3.